A 601-amino-acid polypeptide reads, in one-letter code: MANIAESAVLVSSASSAQAVAKLTQVRGPTSGFDKAQHIIGSYSTMGFQATNYGLARSIAQRMIRKQPPSKVYQIKDGKYVLVPPDVGEDGKTLQQEHVYPNLFMGVTANLMGTGCREAVRFLVQEGVVHRSLEASAPASADGTDDQLMFARLKREYVETYGGPPHPDEEIPRAHSFLCAIVVSGGGVEHDLRRACTAYTLHHYASEAQGHVSSTVSSEATAPPKGLQQRAEKPLGTRAAAGTAKPARFGNVEYPRQGSTGSELFDCLMRTFVQRLCARQARLRAAAMAKPIPDKYDDVCSWSVTPSEVWALCGLWLVDMLAEALGAVRSCTSRLTSGSAVGTAESVTANGKGPEADRDAHIATSASYRAEALARARTTVVYWAALQQVSLFSPSFVDGDITSYLLPTPAPAARPAHRKGGPVADENAGNSKELKRSRKASSSSSTSATAVKVKPPVVERLQVDLVRDVYSINKLAMLSKKTGMLICGGGVVKHHVCNANLMRNGADFTIILSNGQEFDGSDAGAKPEEALSWGKVRMEGAFVKVYGEVSTYLPLLLAEVFVPAVRQRRATDDAQPRRKRSSRGARPPQDVSGHSHLCRGE.

Residues 109-113 (ANLMG) and 184-186 (SGG) each bind NAD(+). 189–190 (EH) lines the spermidine pocket. Residues 210–242 (GHVSSTVSSEATAPPKGLQQRAEKPLGTRAAAG) are disordered. Over residues 211-220 (HVSSTVSSEA) the composition is skewed to polar residues. Asp-398 serves as a coordination point for NAD(+). The segment at 411–451 (PAARPAHRKGGPVADENAGNSKELKRSRKASSSSSTSATAV) is disordered. The span at 440–451 (ASSSSSTSATAV) shows a compositional bias: low complexity. Gly-489 contacts NAD(+). Residue His-494 coordinates spermidine. 514–515 (NG) serves as a coordination point for NAD(+). Spermidine is bound by residues 520–522 (GSD) and 529–535 (EALSWGK). Lys-535 functions as the Nucleophile in the catalytic mechanism. An NAD(+)-binding site is contributed by 548 to 549 (EV). The segment at 568-601 (RRATDDAQPRRKRSSRGARPPQDVSGHSHLCRGE) is disordered.

This sequence belongs to the deoxyhypusine synthase family. As to quaternary structure, homodimer. The cofactor is NAD(+).

It catalyses the reaction [eIF5A protein]-L-lysine + spermidine = [eIF5A protein]-deoxyhypusine + propane-1,3-diamine. It functions in the pathway protein modification; eIF5A hypusination. N1-guanyl-1,7-diaminoheptane has a small inhibitory effect on activity. Functionally, catalyzes the NAD-dependent oxidative cleavage of spermidine and the subsequent transfer of the butylamine moiety of spermidine to the epsilon-amino group of a specific lysine residue of the eIF-5A precursor protein to form the intermediate deoxyhypusine residue. The chain is Deoxyhypusine synthase from Leishmania donovani.